An 822-amino-acid chain; its full sequence is Collagen alpha chain CG42342 (822 aa).

2 disordered regions span residues 1–45 and 66–99; these read MRKH…VEAP and RLAP…KERP. The Cytoplasmic portion of the chain corresponds to 1–104; the sequence is MRKHKAPPSG…SKERPRPTVR (104 aa). Over residues 11–25 the composition is skewed to polar residues; sequence SPRTMAQDNSQSEPS. Positions 76–94 are enriched in low complexity; sequence INNSNNNSNISNNSSNSSS. The helical; Signal-anchor for type II membrane protein transmembrane segment at 105–125 threads the bilayer; it reads FISLLHVASYVLCLCAFSFAL. The Extracellular portion of the chain corresponds to 126 to 822; it reads YGNVRQTRLE…EYQDNLHNNE (697 aa). A coiled-coil region spans residues 131 to 162; that stretch reads QTRLEQRMQRLQQLDARIVELELRLEQQQLLH. Disordered stretches follow at residues 169–188, 205–297, and 345–822; these read QVLA…NGSQ, VSHL…GHPG, and LKGE…HNNE. The stretch at 194-222 forms a coiled coil; that stretch reads VRRELHRLRRDVSHLQLTRRQQRRQAAEA. Collagen-like domains lie at 241 to 299, 350 to 409, 430 to 469, 493 to 526, 527 to 586, 621 to 680, and 681 to 740; these read QPGP…PGMD, GEPG…KGDR, GPPG…GKRG, RGPP…PGSL, GPRG…KGDK, GPPG…SGKA, and GIPG…KGEQ. The segment covering 242 to 251 has biased composition (pro residues); sequence PGPPGPPGPP. Residues 284–293 show a composition bias toward basic and acidic residues; sequence PGDKGQKGDV. Over residues 360-402 the composition is skewed to low complexity; it reads EAGQPGAPGERGPPGEIGAQGPQGEAGQPGVAGPPGVAGAPGT. Positions 403–412 are enriched in basic and acidic residues; it reads KGDKGDRGDR. Positions 431–443 are enriched in pro residues; the sequence is PPGPAGPPGPPGE. Residues 504–517 are compositionally biased toward basic and acidic residues; the sequence is KDGRDGRDGSKGEP. The span at 522-540 shows a compositional bias: low complexity; the sequence is EPGSLGPRGLDGLPGEPGI. Over residues 567 to 579 the composition is skewed to pro residues; sequence LMGPPGLPGPPGY. A compositionally biased stretch (basic and acidic residues) spans 583 to 602; sequence KGDKGDRGDSYRKMRRRQDD. A compositionally biased stretch (pro residues) spans 619-628; the sequence is PPGPPGPMGP. The segment covering 638-655 has biased composition (basic and acidic residues); it reads RGLDGRKGDPGEKGHKGD. Residues 658–668 show a composition bias toward low complexity; it reads PMGLPGPMGMR. Residues 790 to 822 adopt a coiled-coil conformation; it reads TSDYEQEEEEDDEQAEDNENEYDEYQDNLHNNE. A compositionally biased stretch (acidic residues) spans 793–815; sequence YEQEEEEDDEQAEDNENEYDEYQ.

It localises to the cell membrane. In Drosophila melanogaster (Fruit fly), this protein is Collagen alpha chain CG42342.